The sequence spans 565 residues: NAD-dependent malic enzyme (565 aa).

The active-site Proton donor is Y104. R157 provides a ligand contact to NAD(+). K175 (proton acceptor) is an active-site residue. Residues E246, D247, and D270 each contribute to the a divalent metal cation site. Positions 270 and 418 each coordinate NAD(+).

It belongs to the malic enzymes family. As to quaternary structure, homotetramer. It depends on Mg(2+) as a cofactor. Mn(2+) serves as cofactor.

The catalysed reaction is (S)-malate + NAD(+) = pyruvate + CO2 + NADH. It catalyses the reaction oxaloacetate + H(+) = pyruvate + CO2. The sequence is that of NAD-dependent malic enzyme from Pectobacterium carotovorum subsp. carotovorum (strain PC1).